We begin with the raw amino-acid sequence, 365 residues long: Sulfate/thiosulfate import ATP-binding protein CysA (365 aa).

Residues 3–237 (IEIANIKKSF…PATRFVLEFM (235 aa)) enclose the ABC transporter domain. 35–42 (GPSGSGKT) is an ATP binding site.

This sequence belongs to the ABC transporter superfamily. Sulfate/tungstate importer (TC 3.A.1.6) family. As to quaternary structure, the complex is composed of two ATP-binding proteins (CysA), two transmembrane proteins (CysT and CysW) and a solute-binding protein (CysP).

The protein localises to the cell inner membrane. It catalyses the reaction sulfate(out) + ATP + H2O = sulfate(in) + ADP + phosphate + H(+). The enzyme catalyses thiosulfate(out) + ATP + H2O = thiosulfate(in) + ADP + phosphate + H(+). Its function is as follows. Part of the ABC transporter complex CysAWTP involved in sulfate/thiosulfate import. Responsible for energy coupling to the transport system. The sequence is that of Sulfate/thiosulfate import ATP-binding protein CysA from Escherichia coli (strain K12).